We begin with the raw amino-acid sequence, 478 residues long: UDP-N-acetylmuramate--L-alanine ligase (478 aa).

122–128 lines the ATP pocket; it reads GTHGKTT.

This sequence belongs to the MurCDEF family.

Its subcellular location is the cytoplasm. It carries out the reaction UDP-N-acetyl-alpha-D-muramate + L-alanine + ATP = UDP-N-acetyl-alpha-D-muramoyl-L-alanine + ADP + phosphate + H(+). The protein operates within cell wall biogenesis; peptidoglycan biosynthesis. Functionally, cell wall formation. The protein is UDP-N-acetylmuramate--L-alanine ligase of Stenotrophomonas maltophilia (strain R551-3).